Reading from the N-terminus, the 112-residue chain is Large ribosomal subunit protein uL18 (112 aa).

This sequence belongs to the universal ribosomal protein uL18 family. In terms of assembly, part of the 50S ribosomal subunit; part of the 5S rRNA/L5/L18/L25 subcomplex. Contacts the 5S and 23S rRNAs.

In terms of biological role, this is one of the proteins that bind and probably mediate the attachment of the 5S RNA into the large ribosomal subunit, where it forms part of the central protuberance. The polypeptide is Large ribosomal subunit protein uL18 (Deinococcus deserti (strain DSM 17065 / CIP 109153 / LMG 22923 / VCD115)).